A 650-amino-acid polypeptide reads, in one-letter code: Acetyl-coenzyme A synthetase (650 aa).

CoA contacts are provided by residues 191 to 194, Thr-311, and Asn-335; that span reads RGGR. ATP is bound by residues 387–389, 411–416, Asp-501, and Arg-516; these read GEP and DTWWQT. A CoA-binding site is contributed by Ser-524. An ATP-binding site is contributed by Arg-527. Residues Val-538, His-540, and Ile-543 each coordinate Mg(2+). Arg-585 serves as a coordination point for CoA. Lys-610 carries the post-translational modification N6-acetyllysine.

The protein belongs to the ATP-dependent AMP-binding enzyme family. Mg(2+) serves as cofactor. In terms of processing, acetylated. Deacetylation by the SIR2-homolog deacetylase activates the enzyme.

The enzyme catalyses acetate + ATP + CoA = acetyl-CoA + AMP + diphosphate. Functionally, catalyzes the conversion of acetate into acetyl-CoA (AcCoA), an essential intermediate at the junction of anabolic and catabolic pathways. AcsA undergoes a two-step reaction. In the first half reaction, AcsA combines acetate with ATP to form acetyl-adenylate (AcAMP) intermediate. In the second half reaction, it can then transfer the acetyl group from AcAMP to the sulfhydryl group of CoA, forming the product AcCoA. In Vibrio parahaemolyticus serotype O3:K6 (strain RIMD 2210633), this protein is Acetyl-coenzyme A synthetase.